A 148-amino-acid chain; its full sequence is Aspartate carbamoyltransferase regulatory chain (148 aa).

Residues cysteine 106, cysteine 111, cysteine 134, and cysteine 137 each coordinate Zn(2+).

This sequence belongs to the PyrI family. In terms of assembly, contains catalytic and regulatory chains. The cofactor is Zn(2+).

Functionally, involved in allosteric regulation of aspartate carbamoyltransferase. This Methanococcus maripaludis (strain C5 / ATCC BAA-1333) protein is Aspartate carbamoyltransferase regulatory chain.